The following is a 414-amino-acid chain: Serine/threonine transporter SstT (414 aa).

The Cytoplasmic segment spans residues 2–15 (TTQRSPGLFRRLAH). The helical transmembrane segment at 16–36 (GSLVKQILVGLVLGILLAWIS) threads the bilayer. Residues 37 to 45 (KPAAEAVGL) are Periplasmic-facing. The chain crosses the membrane as a helical span at residues 46 to 66 (LGTLFVGALKAVAPILVLMLV). Residues 67–83 (MASIANHQHGQKTNIRP) are Cytoplasmic-facing. The helical transmembrane segment at 84 to 104 (ILFLYLLGTFSAALAAVVFSF) threads the bilayer. Residues 105 to 142 (AFPSTLHLSSSAGDISPPSGIVEVMRGLVMSMVSNPID) are Periplasmic-facing. The chain crosses the membrane as a helical span at residues 143 to 163 (ALLKGNYIGILVWAIGLGFAL). The Cytoplasmic portion of the chain corresponds to 164-179 (RHGNETTKNLVNDMSN). The helical transmembrane segment at 180-200 (AVTFMVKLVIRFAPIGIFGLV) threads the bilayer. The Periplasmic segment spans residues 201–217 (SSTLATTGFSTLWGYAQ). Residues 218–238 (LLVVLVGCMLLVALVVNPLLV) form a helical membrane-spanning segment. Over 239–299 (WWKIRRNPFP…VSIPLGATIN (61 aa)) the chain is Cytoplasmic. A helical membrane pass occupies residues 300 to 320 (MAGAAITITVLTLAAVNTLGI). Topologically, residues 321 to 331 (PVDLPTALLLS) are periplasmic. A helical transmembrane segment spans residues 332-352 (VVASLCACGASGVAGGSLLLI). Topologically, residues 353 to 414 (PLACNMFGIS…DRLANSALRN (62 aa)) are cytoplasmic.

It belongs to the dicarboxylate/amino acid:cation symporter (DAACS) (TC 2.A.23) family.

The protein resides in the cell inner membrane. The enzyme catalyses L-serine(in) + Na(+)(in) = L-serine(out) + Na(+)(out). The catalysed reaction is L-threonine(in) + Na(+)(in) = L-threonine(out) + Na(+)(out). Functionally, involved in the import of serine and threonine into the cell, with the concomitant import of sodium (symport system). The polypeptide is Serine/threonine transporter SstT (Shigella flexneri serotype 5b (strain 8401)).